The sequence spans 324 residues: Adenine deaminase (324 aa).

Residues His11, His13, and His189 each contribute to the Zn(2+) site. Catalysis depends on Glu192, which acts as the Proton donor. Residue Asp270 participates in Zn(2+) binding. Asp271 serves as a coordination point for substrate.

This sequence belongs to the metallo-dependent hydrolases superfamily. Adenosine and AMP deaminases family. Adenine deaminase type 2 subfamily. Zn(2+) is required as a cofactor.

It catalyses the reaction adenine + H2O + H(+) = hypoxanthine + NH4(+). In terms of biological role, catalyzes the hydrolytic deamination of adenine to hypoxanthine. Plays an important role in the purine salvage pathway and in nitrogen catabolism. The chain is Adenine deaminase from Sinorhizobium medicae (strain WSM419) (Ensifer medicae).